A 291-amino-acid chain; its full sequence is Probable prolyl 4-hydroxylase 12 (291 aa).

Topologically, residues 1–156 are cytoplasmic; the sequence is MACLSRIFLI…GEEPSSVLHE (156 aa). One can recognise a Fe2OG dioxygenase domain in the interval 125–239; sequence NGGSIKVRSY…LLVATKLIYA (115 aa). Fe cation is bound by residues Lys142 and Asp144. A helical; Signal-anchor for type II membrane protein transmembrane segment spans residues 157–173; sequence SLLATVVLYLSNTTQGG. Residues 174 to 291 lie on the Lumenal side of the membrane; sequence ELLFPNSEMK…GTCRKSCNAC (118 aa). N-linked (GlcNAc...) asparagine glycosylation is present at Asn211. A Fe cation-binding site is contributed by His220. The region spanning 251–291 is the ShKT domain; it reads CSDEDENCGRWAKLGECKKNPVYMIGSPDYYGTCRKSCNAC. Cystine bridges form between Cys251-Cys291, Cys258-Cys284, and Cys267-Cys288.

The protein belongs to the P4HA family. Requires Fe(2+) as cofactor. L-ascorbate serves as cofactor.

Its subcellular location is the endoplasmic reticulum membrane. The enzyme catalyses L-prolyl-[collagen] + 2-oxoglutarate + O2 = trans-4-hydroxy-L-prolyl-[collagen] + succinate + CO2. Functionally, catalyzes the post-translational formation of 4-hydroxyproline in -Xaa-Pro-Gly- sequences in proline-rich peptide sequences of plant glycoproteins and other proteins. Hydroxyprolines are important constituent of many plant cell wall glycoproteins such as extensins, hydroxyproline-rich glycoproteins, lectins and arabinogalactan proteins. The polypeptide is Probable prolyl 4-hydroxylase 12 (Arabidopsis thaliana (Mouse-ear cress)).